A 404-amino-acid chain; its full sequence is Lysophospholipid transporter LplT (404 aa).

12 helical membrane passes run 16–36 (MIAV…LLFA), 53–73 (ILQM…GQFA), 91–111 (AGAL…LVGV), 139–159 (MMEA…GVLA), 164–184 (GVAL…NMFI), 195–213 (SWRP…LVLW), 227–247 (LFWG…PIAL), 253–273 (ATPT…AGAA), 285–305 (CLPA…QHSM), 310–330 (LLLI…NALL), 350–370 (GENT…KLGV), and 372–392 (VIAV…LLWG).

Belongs to the major facilitator superfamily. LplT (TC 2.A.1.42) family.

Its subcellular location is the cell inner membrane. In terms of biological role, catalyzes the facilitated diffusion of 2-acyl-glycero-3-phosphoethanolamine (2-acyl-GPE) into the cell. The polypeptide is Lysophospholipid transporter LplT (Yersinia enterocolitica serotype O:8 / biotype 1B (strain NCTC 13174 / 8081)).